The chain runs to 430 residues: von Willebrand factor (430 aa).

Asn-6 carries an N-linked (GlcNAc...) asparagine glycan. Residues Cys-9 and Cys-12 are joined by a disulfide bond. Thr-23, Thr-30, and Thr-31 each carry an O-linked (GalNAc...) threonine glycan. The cysteines at positions 47 and 233 are disulfide-linked. The 177-residue stretch at 52–228 (DLVFLLDGSY…DELEQRRDEI (177 aa)) folds into the VWFA 1; binding site for platelet glycoprotein Ib domain. The O-linked (GalNAc...) threonine glycan is linked to Thr-252. Ser-261 carries O-linked (GalNAc...) serine glycosylation. The VWFA 2 domain maps to 273-430 (DVVFVLEASD…ITPIFIQDFE (158 aa)). Residues Asn-290 and Asn-349 are each glycosylated (N-linked (GlcNAc...) asparagine).

In terms of assembly, multimeric. Interacts with F8. Post-translationally, N- and O-glycosylated. Plasma.

The protein localises to the secreted. It is found in the extracellular space. Its subcellular location is the extracellular matrix. Its function is as follows. Important in the maintenance of hemostasis, it promotes adhesion of platelets to the sites of vascular injury by forming a molecular bridge between sub-endothelial collagen matrix and platelet-surface receptor complex GPIb-IX-V. Also acts as a chaperone for coagulation factor VIII, delivering it to the site of injury, stabilizing its heterodimeric structure and protecting it from premature clearance from plasma. The polypeptide is von Willebrand factor (Rattus norvegicus (Rat)).